A 113-amino-acid chain; its full sequence is Endoribonuclease SymE (113 aa).

Residues 29–74 (GRYPDYSRIPAITLKGQWLEVAGFATGTAVDVKVMEGCIVLTAQPP) enclose the SpoVT-AbrB domain.

This sequence belongs to the SymE family.

Its subcellular location is the cytoplasm. In terms of biological role, involved in the degradation and recycling of damaged RNA. It is itself a target for degradation by the ATP-dependent protease Lon. The chain is Endoribonuclease SymE from Escherichia coli O7:K1 (strain IAI39 / ExPEC).